We begin with the raw amino-acid sequence, 96 residues long: Carboxysome shell protein CsoS1A (96 aa).

One can recognise a BMC domain in the interval 7–92 (ALGMIETRGL…PHKEVEPVLT (86 aa)).

It belongs to the bacterial microcompartments protein family. CsoS1 subfamily. Homohexamer with a small central pore. Forms a CsoS2-CsoS1-RuBisCO complex.

It localises to the carboxysome. One of shell proteins of the carboxysome, a polyhedral inclusion where RuBisCO (ribulose bisphosphate carboxylase, ccbL-ccbS) is sequestered. Assembles into hexamers which make sheets that form the facets of the polyhedral carboxysome. The shell probably limits the diffusion of CO(2) into and out of the carboxysome. The polypeptide is Carboxysome shell protein CsoS1A (Hydrogenovibrio crunogenus (strain DSM 25203 / XCL-2) (Thiomicrospira crunogena)).